We begin with the raw amino-acid sequence, 516 residues long: Bifunctional purine biosynthesis protein PurH (516 aa).

Residues 1–150 (MSDDRKQIKR…KNHPSVAVVV (150 aa)) form the MGS-like domain.

It belongs to the PurH family.

The catalysed reaction is (6R)-10-formyltetrahydrofolate + 5-amino-1-(5-phospho-beta-D-ribosyl)imidazole-4-carboxamide = 5-formamido-1-(5-phospho-D-ribosyl)imidazole-4-carboxamide + (6S)-5,6,7,8-tetrahydrofolate. The enzyme catalyses IMP + H2O = 5-formamido-1-(5-phospho-D-ribosyl)imidazole-4-carboxamide. The protein operates within purine metabolism; IMP biosynthesis via de novo pathway; 5-formamido-1-(5-phospho-D-ribosyl)imidazole-4-carboxamide from 5-amino-1-(5-phospho-D-ribosyl)imidazole-4-carboxamide (10-formyl THF route): step 1/1. Its pathway is purine metabolism; IMP biosynthesis via de novo pathway; IMP from 5-formamido-1-(5-phospho-D-ribosyl)imidazole-4-carboxamide: step 1/1. The chain is Bifunctional purine biosynthesis protein PurH from Corynebacterium ammoniagenes (Brevibacterium ammoniagenes).